The sequence spans 391 residues: MRNWLLPEYIEDVLPRDAYRIEKIRRLIMDMLFAHGYQFVMPPLLEYVESLLAGSGSGMNLRMFKVVDQLSGRMMGLRADMTPQAARIDAHLLNISGVTRLCYASSVVHTVPDEITRTREPFQVGAELYGHSGIESDLEIQCLLLECLSVSGIHSIHLDLGHIRVFRSLIRDSGIKPEFEMELYAALWAKDISSLKELVRTGLNKRLTRSVQNALLLLPELYGDGTVLLSARQHLPDFPEIGEALDQLEHVARILQPYVDRITFDLADLRGYHYHTGMVFAVYTPGCPAPIALGGRYDEIGKSFGRARPATGFSLDLKQLSQLTDMNGYPSGILAPWKPEDEKLAAMVRQLRAEGHIVVTELPGEENQEVTGCDRKLVFRNGNWEIDPVTG.

The protein belongs to the class-II aminoacyl-tRNA synthetase family. HisZ subfamily. As to quaternary structure, heteromultimer composed of HisG and HisZ subunits.

It is found in the cytoplasm. It functions in the pathway amino-acid biosynthesis; L-histidine biosynthesis; L-histidine from 5-phospho-alpha-D-ribose 1-diphosphate: step 1/9. Its function is as follows. Required for the first step of histidine biosynthesis. May allow the feedback regulation of ATP phosphoribosyltransferase activity by histidine. The polypeptide is ATP phosphoribosyltransferase regulatory subunit (Nitrosomonas europaea (strain ATCC 19718 / CIP 103999 / KCTC 2705 / NBRC 14298)).